The sequence spans 933 residues: MPRPRPRALRGSSPGWALVAAVAVGAALLMATLAVAAPPGPRGPAARSPGLEDASVEPVEDGDYDEYDDEGHTPTDVPGSGPESPGPDRPPRGPGGGSGRRRGSPGNGTRSAARRQLRESLRRIQAEYAASAFYVCPPPTGATVVQFEEPRPCPDVAAGKNFTEGIAVVFKENIAPYKFTATKYYKEITVSQTWQGSRYLQLTGLYNDRAPVPFSEITDLINGKGRCRSDVTYTRSQRRVTAYDGDEWGREVALVPAKTSTPNSRGWYTTDRVYAPNAHAGFYKTGTTVNCIVEEMEARSAFPYDSFVLATGEFVYASPFSGFSEDARRERNRYAPDRFRQVDGFYPRDLDSGQRAATPVVRNLLTTPTFTVGWDWKPKRPNVCSVTKWQVVEEMVRAEYGSAFRFTSAALSATFTSNLTQYPPELIEHSDCVAREAAESIEAIYARRYNASHVRVGGVQYYLAAGGFLLAFQPLLSNSLAEMYRREALLGRSGDLAAALAPPPVAAPASGAGPRGTISTTQTVEFARLQFTYDHIQKHVNEMLGRIAAAWCQLQNQELVLWNEARKLNPGAIASATVGTRVGARMLGDVMAVSTCIPVSPDNVIMQNSMRIPGDPKTCYARPLVSFRYTDEGELVEGQLGEDNEIRLEQNNVEPCTVGHKRYFVFGGGYVYFEEYAYSHQVSRADVPVVSTFVDLNLTMLEDHEFLPLEVYTRREIKDSGLLDYAEVQRRNQLHALRFSDIDRIMNDSANAALMAGLARFFDGMGDAGKAIGRAVLGVTEGLISVVSGVSSFLSNPFGALAVGLLVLAGLVAAFFAMRYIMRLRANPMRALYPLTTSGIKAEARAALGSGGDKGGAGDGAAGVEDFDEAKLEAARDMIRYMTLVSAMERTAHKAKKRGTSARISAHLTDMVLAAQGAEYQPLSKDDEDGADP.

The N-terminal stretch at methionine 1 to alanine 36 is a signal peptide. Residues alanine 36–proline 49 are compositionally biased toward low complexity. The segment at alanine 36–arginine 115 is disordered. At alanine 37–proline 797 the chain is on the virion surface side. A compositionally biased stretch (acidic residues) spans alanine 54 to aspartate 69. N-linked (GlcNAc...) asparagine; by host glycans are attached at residues asparagine 107 and asparagine 161. Disulfide bonds link cysteine 136/cysteine 596, cysteine 153/cysteine 552, cysteine 227/cysteine 291, cysteine 384/cysteine 432, and cysteine 619/cysteine 656. Involved in fusion and/or binding to host membrane stretches follow at residues threonine 193–tyrosine 199 and alanine 278–threonine 285. Residues asparagine 418 and asparagine 450 are each glycosylated (N-linked (GlcNAc...) asparagine; by host). N-linked (GlcNAc...) asparagine; by host glycosylation is found at asparagine 697 and asparagine 747. Hydrophobic membrane proximal region stretches follow at residues isoleucine 742–serine 795 and leucine 754–serine 795. The helical transmembrane segment at phenylalanine 798 to methionine 818 threads the bilayer. The Intravirion portion of the chain corresponds to arginine 819–proline 933. The Golgi targeting motif lies at tyrosine 881–leucine 884. Residues tyrosine 920 to leucine 923 carry the Internalization motif motif.

This sequence belongs to the herpesviridae glycoprotein B family. As to quaternary structure, homotrimer; disulfide-linked. Binds to heparan sulfate proteoglycans. Interacts with gH/gL heterodimer.

It is found in the virion membrane. The protein localises to the host cell membrane. Its subcellular location is the host endosome membrane. The protein resides in the host Golgi apparatus membrane. In terms of biological role, envelope glycoprotein that forms spikes at the surface of virion envelope. Essential for the initial attachment to heparan sulfate moieties of the host cell surface proteoglycans. Involved in fusion of viral and cellular membranes leading to virus entry into the host cell. Following initial binding to its host receptors, membrane fusion is mediated by the fusion machinery composed at least of gB and the heterodimer gH/gL. May be involved in the fusion between the virion envelope and the outer nuclear membrane during virion egress. The chain is Envelope glycoprotein B from Herpesvirus ateles type 1 (strain Lennette).